Reading from the N-terminus, the 473-residue chain is Photosystem II CP43 reaction center protein (473 aa).

Residues 1–14 (MKTLYSPRRYYPVE) constitute a propeptide that is removed on maturation. Thr-15 carries the post-translational modification N-acetylthreonine. Thr-15 is subject to Phosphothreonine. 5 helical membrane-spanning segments follow: residues 69–93 (LFEVAHFVPEKPMYEQGLILLPHLA), 134–155 (IIGPETLEESFPFFGYVWKDKN), 178–200 (KAVWFGGVYDTWAPGGGDVRVIT), 255–275 (KPFAWARRAFVWSGEAYLSYS), and 291–312 (WFNNTAYPSEFYGPTGPEASQA). Residue Glu-367 coordinates [CaMn4O5] cluster. A helical transmembrane segment spans residues 447–471 (RARAAAAGFEKGIERETEPVLFMSP).

The protein belongs to the PsbB/PsbC family. PsbC subfamily. In terms of assembly, PSII is composed of 1 copy each of membrane proteins PsbA, PsbB, PsbC, PsbD, PsbE, PsbF, PsbH, PsbI, PsbJ, PsbK, PsbL, PsbM, PsbT, PsbX, PsbY, PsbZ, Psb30/Ycf12, at least 3 peripheral proteins of the oxygen-evolving complex and a large number of cofactors. It forms dimeric complexes. Binds multiple chlorophylls and provides some of the ligands for the Ca-4Mn-5O cluster of the oxygen-evolving complex. It may also provide a ligand for a Cl- that is required for oxygen evolution. PSII binds additional chlorophylls, carotenoids and specific lipids. is required as a cofactor.

The protein resides in the plastid. The protein localises to the chloroplast thylakoid membrane. In terms of biological role, one of the components of the core complex of photosystem II (PSII). It binds chlorophyll and helps catalyze the primary light-induced photochemical processes of PSII. PSII is a light-driven water:plastoquinone oxidoreductase, using light energy to abstract electrons from H(2)O, generating O(2) and a proton gradient subsequently used for ATP formation. This is Photosystem II CP43 reaction center protein from Chaetosphaeridium globosum (Charophycean green alga).